Reading from the N-terminus, the 272-residue chain is Dermonecrotic toxin LspaSicTox-alphaII1 (272 aa).

H5 is a catalytic residue. Residues E25 and D27 each coordinate Mg(2+). H41 acts as the Nucleophile in catalysis. Intrachain disulfides connect C45-C51 and C47-C190. Mg(2+) is bound at residue D85.

The protein belongs to the arthropod phospholipase D family. Class II subfamily. Mg(2+) serves as cofactor. As to expression, expressed by the venom gland.

It localises to the secreted. It catalyses the reaction an N-(acyl)-sphingosylphosphocholine = an N-(acyl)-sphingosyl-1,3-cyclic phosphate + choline. It carries out the reaction an N-(acyl)-sphingosylphosphoethanolamine = an N-(acyl)-sphingosyl-1,3-cyclic phosphate + ethanolamine. The catalysed reaction is a 1-acyl-sn-glycero-3-phosphocholine = a 1-acyl-sn-glycero-2,3-cyclic phosphate + choline. The enzyme catalyses a 1-acyl-sn-glycero-3-phosphoethanolamine = a 1-acyl-sn-glycero-2,3-cyclic phosphate + ethanolamine. Its function is as follows. Dermonecrotic toxins cleave the phosphodiester linkage between the phosphate and headgroup of certain phospholipids (sphingolipid and lysolipid substrates), forming an alcohol (often choline) and a cyclic phosphate. This toxin acts on sphingomyelin (SM). It may also act on ceramide phosphoethanolamine (CPE), lysophosphatidylcholine (LPC) and lysophosphatidylethanolamine (LPE), but not on lysophosphatidylserine (LPS), and lysophosphatidylglycerol (LPG). It acts by transphosphatidylation, releasing exclusively cyclic phosphate products as second products. Induces dermonecrosis, hemolysis, increased vascular permeability, edema, inflammatory response, and platelet aggregation. The chain is Dermonecrotic toxin LspaSicTox-alphaII1 from Loxosceles spadicea (Recluse spider).